Consider the following 329-residue polypeptide: ATP-dependent (S)-NAD(P)H-hydrate dehydratase (329 aa).

One can recognise a YjeF C-terminal domain in the interval 35-326 (TLQLVRNIIP…AEVGAAFSKL (292 aa)). The residue at position 67 (tyrosine 67) is a Phosphotyrosine. Residues glycine 135 and 188-194 (NHMEFSR) each bind (6S)-NADPHX. Asparagine 207 and asparagine 222 each carry an N-linked (GlcNAc...) asparagine glycan. Residues 228 to 232 (KGERD) and 247 to 256 (GSSRRCGGQG) contribute to the ATP site. Aspartate 257 serves as a coordination point for (6S)-NADPHX. The N-linked (GlcNAc...) asparagine glycan is linked to asparagine 279.

The protein belongs to the NnrD/CARKD family. The cofactor is Mg(2+).

The protein resides in the mitochondrion. It catalyses the reaction (6S)-NADHX + ATP = ADP + phosphate + NADH + H(+). It carries out the reaction (6S)-NADPHX + ATP = ADP + phosphate + NADPH + H(+). Catalyzes the dehydration of the S-form of NAD(P)HX at the expense of ATP, which is converted to ADP. Together with NAD(P)HX epimerase, which catalyzes the epimerization of the S- and R-forms, the enzyme allows the repair of both epimers of NAD(P)HX, a damaged form of NAD(P)H that is a result of enzymatic or heat-dependent hydration. This is ATP-dependent (S)-NAD(P)H-hydrate dehydratase from Pongo abelii (Sumatran orangutan).